Here is a 107-residue protein sequence, read N- to C-terminus: Stellacyanin (107 aa).

The Phytocyanin domain maps to Thr-1 to Val-105. A glycan (N-linked (GlcNAc...) asparagine) is linked at Asn-28. His-46 lines the Cu cation pocket. The cysteines at positions 59 and 93 are disulfide-linked. Residue Asn-60 is glycosylated (N-linked (GlcNAc...) asparagine). Residues Cys-87, His-92, and Gln-97 each coordinate Cu cation. Asn-102 carries an N-linked (GlcNAc...) asparagine glycan.

The polypeptide is Stellacyanin (Toxicodendron vernicifluum (Japanese lacquer tree)).